Reading from the N-terminus, the 159-residue chain is MKIKIICVGKIKEKYLKDGIAEYQKRLSRFTQFEIIELADEKTPEKASQAENEKIMEKEANRILSKIGNRDYVIALAIEGKQYASEEFSQFITDITIQGFSDITFIIGGSLGLHSKIKQKAHALISFGRLTLPHQLMRLVLTEQIYRAFMIQEGSPYHK.

Residues Leu-76, Gly-108, and 127–132 (FGRLTL) contribute to the S-adenosyl-L-methionine site.

Belongs to the RNA methyltransferase RlmH family. Homodimer.

It is found in the cytoplasm. The catalysed reaction is pseudouridine(1915) in 23S rRNA + S-adenosyl-L-methionine = N(3)-methylpseudouridine(1915) in 23S rRNA + S-adenosyl-L-homocysteine + H(+). Its function is as follows. Specifically methylates the pseudouridine at position 1915 (m3Psi1915) in 23S rRNA. The protein is Ribosomal RNA large subunit methyltransferase H of Streptococcus uberis (strain ATCC BAA-854 / 0140J).